The primary structure comprises 933 residues: Isoleucine--tRNA ligase (933 aa).

The 'HIGH' region motif lies at 57–67 (PYANGNIHVGH). E554 is an L-isoleucyl-5'-AMP binding site. The 'KMSKS' region signature appears at 595–599 (KMSKS). An ATP-binding site is contributed by K598.

The protein belongs to the class-I aminoacyl-tRNA synthetase family. IleS type 1 subfamily. As to quaternary structure, monomer.

The protein localises to the cytoplasm. It carries out the reaction tRNA(Ile) + L-isoleucine + ATP = L-isoleucyl-tRNA(Ile) + AMP + diphosphate. Its function is as follows. Catalyzes the attachment of isoleucine to tRNA(Ile). As IleRS can inadvertently accommodate and process structurally similar amino acids such as valine, to avoid such errors it has two additional distinct tRNA(Ile)-dependent editing activities. One activity is designated as 'pretransfer' editing and involves the hydrolysis of activated Val-AMP. The other activity is designated 'posttransfer' editing and involves deacylation of mischarged Val-tRNA(Ile). In Streptococcus pyogenes serotype M1, this protein is Isoleucine--tRNA ligase.